The primary structure comprises 199 residues: Large ribosomal subunit protein uL4 (199 aa).

This sequence belongs to the universal ribosomal protein uL4 family. Part of the 50S ribosomal subunit.

Its function is as follows. One of the primary rRNA binding proteins, this protein initially binds near the 5'-end of the 23S rRNA. It is important during the early stages of 50S assembly. It makes multiple contacts with different domains of the 23S rRNA in the assembled 50S subunit and ribosome. Functionally, forms part of the polypeptide exit tunnel. This Aquifex aeolicus (strain VF5) protein is Large ribosomal subunit protein uL4.